Reading from the N-terminus, the 428-residue chain is ATP-dependent RNA helicase RhlB (428 aa).

Positions 9–37 (QKFSDFALHPLVVEALENKGFQYCTPIQA) match the Q motif motif. The 180-residue stretch at 40–219 (LPLTLSGRDV…FEQMNNAEYV (180 aa)) folds into the Helicase ATP-binding domain. 53 to 60 (AQTGTGKT) is an ATP binding site. Positions 165–168 (DEAD) match the DEAD box motif. The region spanning 245 to 390 (RLLQTLIEEE…VSKYNSDALL (146 aa)) is the Helicase C-terminal domain. The interval 394 to 428 (PAPKRLARTRTGNGPRRNSAPRRSGAPRNNRKRPG) is disordered.

The protein belongs to the DEAD box helicase family. RhlB subfamily. Component of the RNA degradosome, which is a multiprotein complex involved in RNA processing and mRNA degradation.

Its subcellular location is the cytoplasm. The enzyme catalyses ATP + H2O = ADP + phosphate + H(+). Its function is as follows. DEAD-box RNA helicase involved in RNA degradation. Has RNA-dependent ATPase activity and unwinds double-stranded RNA. The sequence is that of ATP-dependent RNA helicase RhlB from Yersinia pseudotuberculosis serotype O:1b (strain IP 31758).